We begin with the raw amino-acid sequence, 296 residues long: Probable AP endonuclease (296 aa).

The cysteines at positions 16 and 20 are disulfide-linked. Residues histidine 78, histidine 115, glutamate 142, histidine 182, histidine 218, aspartate 231, histidine 233, and glutamate 271 each contribute to the Zn(2+) site.

The protein belongs to the AP endonuclease 2 family. The cofactor is Zn(2+).

The protein localises to the host nucleus. It localises to the host cytoplasm. Its subcellular location is the virion. Functionally, endonuclease of the viral base excision repair system that catalyzes DNA cleavage reaction at the apurinic or apyrimidinic sites (AP sites). Cleaves phosphodiester bonds on the 5' side of AP sites. In addition to endonuclease activity, the AP endonuclease has a proofreading 3'-5' exonuclease activity that is considerably more efficient in the elimination of a mismatch than in that of a correctly paired base. Displays 3'-phosphatase and 3'-repair diesterase activities. The single nucleotide gaps generated by the AP endonuclease are filled by the viral repair DNA polymerase X and the DNA ligase. The chain is Probable AP endonuclease from Ornithodoros (relapsing fever ticks).